A 329-amino-acid chain; its full sequence is MAWPDLDPPRLAERPLSLQEALFVLEAPPEALPALAEAAIRVKEYFFGRRLKLVRLLNVKSGFCPEDCAYCAQSARSQAAIARYPLLSLEEILERAEEAQRLSARRFCLVAALRGPTPKVLERLGEAAQAIKARFPLELCASLGLLEEGMAEALKAAGFDYYNHNLNTAPSLYPRIATTHTYQDRLWTLKRAREAGLKLCSGVILGMGEGPKEVYEMALALRELGVESLPVNFLLPIPGTPLGDGRTVAGLTPERALKALILFRLLNPKAELRASAGRERYLGPYEPLAFRMVNSIFLQGYLTQPGSPWERDRALWESLDLDVEEGACG.

The Radical SAM core domain maps to 46–275; sequence FFGRRLKLVR…LNPKAELRAS (230 aa). [4Fe-4S] cluster is bound by residues C64, C68, and C71. [2Fe-2S] cluster is bound by residues C108, C140, C200, and R273.

Belongs to the radical SAM superfamily. Biotin synthase family. Homodimer. The cofactor is [4Fe-4S] cluster. [2Fe-2S] cluster serves as cofactor.

It carries out the reaction (4R,5S)-dethiobiotin + (sulfur carrier)-SH + 2 reduced [2Fe-2S]-[ferredoxin] + 2 S-adenosyl-L-methionine = (sulfur carrier)-H + biotin + 2 5'-deoxyadenosine + 2 L-methionine + 2 oxidized [2Fe-2S]-[ferredoxin]. It functions in the pathway cofactor biosynthesis; biotin biosynthesis; biotin from 7,8-diaminononanoate: step 2/2. Its function is as follows. Catalyzes the conversion of dethiobiotin (DTB) to biotin by the insertion of a sulfur atom into dethiobiotin via a radical-based mechanism. This chain is Biotin synthase, found in Thermus thermophilus (strain ATCC 27634 / DSM 579 / HB8).